A 421-amino-acid polypeptide reads, in one-letter code: Caspase-12 (421 aa).

Positions 1–92 constitute a CARD domain; sequence MADKKPSKED…QLSLEYQHES (92 aa). Phosphoserine is present on Ser85. The interval 88–131 is disordered; the sequence is YQHESEDQESEESSASSSSSTESEEENEESKDEERAASAHSMAV. A compositionally biased stretch (acidic residues) spans 109–118; sequence ESEEENEESK. Active-site residues include His252 and Cys300.

The protein belongs to the peptidase C14A family. As to quaternary structure, heterotetramer that consists of two anti-parallel arranged heterodimers, each one formed by two subunits (Potential). May interact with TRAF2.

Its function is as follows. Involved in the activation cascade of caspases responsible for apoptosis execution. The protein is Caspase-12 of Macaca mulatta (Rhesus macaque).